We begin with the raw amino-acid sequence, 35 residues long: Dermonecrotic toxin LdSicTox-alpha-1 (35 aa).

The active site involves His-11. Residues Glu-31 and Asp-33 each contribute to the Mg(2+) site.

It belongs to the arthropod phospholipase D family. Class I subfamily. The cofactor is Mg(2+). Contains 1 disulfide bond. As to expression, expressed by the venom gland.

The protein resides in the secreted. It catalyses the reaction an N-(acyl)-sphingosylphosphocholine = an N-(acyl)-sphingosyl-1,3-cyclic phosphate + choline. It carries out the reaction an N-(acyl)-sphingosylphosphoethanolamine = an N-(acyl)-sphingosyl-1,3-cyclic phosphate + ethanolamine. The catalysed reaction is a 1-acyl-sn-glycero-3-phosphocholine = a 1-acyl-sn-glycero-2,3-cyclic phosphate + choline. The enzyme catalyses a 1-acyl-sn-glycero-3-phosphoethanolamine = a 1-acyl-sn-glycero-2,3-cyclic phosphate + ethanolamine. Its function is as follows. Dermonecrotic toxins cleave the phosphodiester linkage between the phosphate and headgroup of certain phospholipids (sphingolipid and lysolipid substrates), forming an alcohol (often choline) and a cyclic phosphate. This toxin acts on sphingomyelin (SM). It may also act on ceramide phosphoethanolamine (CPE), lysophosphatidylcholine (LPC) and lysophosphatidylethanolamine (LPE), but not on lysophosphatidylserine (LPS), and lysophosphatidylglycerol (LPG). It acts by transphosphatidylation, releasing exclusively cyclic phosphate products as second products. Induces dermonecrosis, hemolysis, increased vascular permeability, edema, inflammatory response, and platelet aggregation. In Loxosceles deserta (Desert recluse spider), this protein is Dermonecrotic toxin LdSicTox-alpha-1.